The sequence spans 456 residues: Exodeoxyribonuclease 7 large subunit (456 aa).

This sequence belongs to the XseA family. Heterooligomer composed of large and small subunits.

It is found in the cytoplasm. The enzyme catalyses Exonucleolytic cleavage in either 5'- to 3'- or 3'- to 5'-direction to yield nucleoside 5'-phosphates.. Its function is as follows. Bidirectionally degrades single-stranded DNA into large acid-insoluble oligonucleotides, which are then degraded further into small acid-soluble oligonucleotides. This is Exodeoxyribonuclease 7 large subunit from Escherichia coli (strain SE11).